Reading from the N-terminus, the 87-residue chain is Exodeoxyribonuclease 7 small subunit (87 aa).

It belongs to the XseB family. In terms of assembly, heterooligomer composed of large and small subunits.

The protein localises to the cytoplasm. The catalysed reaction is Exonucleolytic cleavage in either 5'- to 3'- or 3'- to 5'-direction to yield nucleoside 5'-phosphates.. Bidirectionally degrades single-stranded DNA into large acid-insoluble oligonucleotides, which are then degraded further into small acid-soluble oligonucleotides. The sequence is that of Exodeoxyribonuclease 7 small subunit from Solidesulfovibrio magneticus (strain ATCC 700980 / DSM 13731 / RS-1) (Desulfovibrio magneticus).